Consider the following 316-residue polypeptide: Acetyl-coenzyme A carboxylase carboxyl transferase subunit alpha (316 aa).

A CoA carboxyltransferase C-terminal domain is found at 40 to 293 (LEKRSRDALR…GDLIAKTMKE (254 aa)).

Belongs to the AccA family. In terms of assembly, acetyl-CoA carboxylase is a heterohexamer composed of biotin carboxyl carrier protein (AccB), biotin carboxylase (AccC) and two subunits each of ACCase subunit alpha (AccA) and ACCase subunit beta (AccD).

It is found in the cytoplasm. The catalysed reaction is N(6)-carboxybiotinyl-L-lysyl-[protein] + acetyl-CoA = N(6)-biotinyl-L-lysyl-[protein] + malonyl-CoA. The protein operates within lipid metabolism; malonyl-CoA biosynthesis; malonyl-CoA from acetyl-CoA: step 1/1. Component of the acetyl coenzyme A carboxylase (ACC) complex. First, biotin carboxylase catalyzes the carboxylation of biotin on its carrier protein (BCCP) and then the CO(2) group is transferred by the carboxyltransferase to acetyl-CoA to form malonyl-CoA. This chain is Acetyl-coenzyme A carboxylase carboxyl transferase subunit alpha, found in Mesorhizobium japonicum (strain LMG 29417 / CECT 9101 / MAFF 303099) (Mesorhizobium loti (strain MAFF 303099)).